The sequence spans 381 residues: ELMO domain-containing protein 3 (381 aa).

Positions 170 to 324 (THGRVLQTIY…DLEALAKKSP (155 aa)) constitute an ELMO domain.

Both isoform 1 and isoform 2 are widely expressed.

The protein resides in the cell projection. It localises to the stereocilium. The protein localises to the kinocilium. It is found in the cytoplasm. Its subcellular location is the cytoskeleton. Its function is as follows. Acts as a GTPase-activating protein (GAP) for ARL2 with low specific activity. This Mus musculus (Mouse) protein is ELMO domain-containing protein 3 (Elmod3).